We begin with the raw amino-acid sequence, 256 residues long: Ribonuclease 3 (256 aa).

The RNase III domain occupies 3–125 (LDALQQRLGY…IFGAVFLDGG (123 aa)). A Mg(2+)-binding site is contributed by Glu-38. Residue Asp-42 is part of the active site. Mg(2+)-binding residues include Asp-111 and Glu-114. Glu-114 is a catalytic residue. Residues 152 to 222 (DAKTLLQEYL…AKLALDEAHR (71 aa)) form the DRBM domain. Residues 226 to 256 (QLVKRSRAERTGKTRKQATPPDPQLSLRLKE) are disordered.

Belongs to the ribonuclease III family. Homodimer. Mg(2+) serves as cofactor.

It localises to the cytoplasm. It carries out the reaction Endonucleolytic cleavage to 5'-phosphomonoester.. Functionally, digests double-stranded RNA. Involved in the processing of primary rRNA transcript to yield the immediate precursors to the large and small rRNAs (23S and 16S). Processes some mRNAs, and tRNAs when they are encoded in the rRNA operon. Processes pre-crRNA and tracrRNA of type II CRISPR loci if present in the organism. This is Ribonuclease 3 from Ralstonia pickettii (strain 12J).